We begin with the raw amino-acid sequence, 54 residues long: Putative ATP synthase subunit epsilon, mitochondrial (54 aa).

This sequence belongs to the eukaryotic ATPase epsilon family. In terms of assembly, F-type ATPases have 2 components, CF(1) - the catalytic core - and CF(0) - the membrane proton channel. CF(1) has five subunits: alpha(3), beta(3), gamma(1), delta(1), epsilon(1). CF(0) seems to have nine subunits: a, b, c, d, e, f, g, F6 and 8 (or A6L).

The protein resides in the mitochondrion. It localises to the mitochondrion inner membrane. Functionally, mitochondrial membrane ATP synthase (F(1)F(0) ATP synthase or Complex V) produces ATP from ADP in the presence of a proton gradient across the membrane which is generated by electron transport complexes of the respiratory chain. F-type ATPases consist of two structural domains, F(1) - containing the extramembraneous catalytic core, and F(0) - containing the membrane proton channel, linked together by a central stalk and a peripheral stalk. During catalysis, ATP synthesis in the catalytic domain of F(1) is coupled via a rotary mechanism of the central stalk subunits to proton translocation. Part of the complex F(1) domain and of the central stalk which is part of the complex rotary element. Rotation of the central stalk against the surrounding alpha(3)beta(3) subunits leads to hydrolysis of ATP in three separate catalytic sites on the beta subunits. This is Putative ATP synthase subunit epsilon, mitochondrial from Caenorhabditis elegans.